The primary structure comprises 758 residues: 5-methyltetrahydropteroyltriglutamate--homocysteine methyltransferase (758 aa).

Residues 17–20 (RELK) and lysine 117 each bind 5-methyltetrahydropteroyltri-L-glutamate. Residues 434–436 (IGS) and glutamate 487 each bind L-homocysteine. Residues 434–436 (IGS) and glutamate 487 contribute to the L-methionine site. 5-methyltetrahydropteroyltri-L-glutamate-binding positions include 518–519 (RC) and tryptophan 564. Residue aspartate 602 participates in L-homocysteine binding. Aspartate 602 serves as a coordination point for L-methionine. 5-methyltetrahydropteroyltri-L-glutamate is bound at residue glutamate 608. Residues histidine 644, cysteine 646, and glutamate 668 each coordinate Zn(2+). The active-site Proton donor is the histidine 697. Position 729 (cysteine 729) interacts with Zn(2+).

It belongs to the vitamin-B12 independent methionine synthase family. Requires Zn(2+) as cofactor.

The enzyme catalyses 5-methyltetrahydropteroyltri-L-glutamate + L-homocysteine = tetrahydropteroyltri-L-glutamate + L-methionine. It participates in amino-acid biosynthesis; L-methionine biosynthesis via de novo pathway; L-methionine from L-homocysteine (MetE route): step 1/1. In terms of biological role, catalyzes the transfer of a methyl group from 5-methyltetrahydrofolate to homocysteine resulting in methionine formation. The protein is 5-methyltetrahydropteroyltriglutamate--homocysteine methyltransferase of Photorhabdus laumondii subsp. laumondii (strain DSM 15139 / CIP 105565 / TT01) (Photorhabdus luminescens subsp. laumondii).